Reading from the N-terminus, the 87-residue chain is Mitochondrial import inner membrane translocase subunit TIM9 (87 aa).

The Twin CX3C motif signature appears at 35-59 (CFSDCVNDFTSAKLTSKEQNCIMRC). 2 disulfide bridges follow: Cys35/Cys59 and Cys39/Cys55.

The protein belongs to the small Tim family. In terms of assembly, heterohexamer; composed of 3 copies of TIM9 and 3 copies of TIM10, named soluble 70 kDa complex. Associates with the TIM22 complex, whose core is composed of TIM22 and TIM54. Interacts with the transmembrane regions of multi-pass transmembrane proteins in transit.

The protein resides in the mitochondrion inner membrane. Functionally, mitochondrial intermembrane chaperone that participates in the import and insertion of multi-pass transmembrane proteins into the mitochondrial inner membrane. Also required for the transfer of beta-barrel precursors from the TOM complex to the sorting and assembly machinery (SAM complex) of the outer membrane. Acts as a chaperone-like protein that protects the hydrophobic precursors from aggregation and guide them through the mitochondrial intermembrane space. The chain is Mitochondrial import inner membrane translocase subunit TIM9 (TIM9) from Kluyveromyces lactis (strain ATCC 8585 / CBS 2359 / DSM 70799 / NBRC 1267 / NRRL Y-1140 / WM37) (Yeast).